A 484-amino-acid polypeptide reads, in one-letter code: Proline--tRNA ligase (484 aa).

Belongs to the class-II aminoacyl-tRNA synthetase family. ProS type 3 subfamily. Homodimer.

The protein localises to the cytoplasm. It carries out the reaction tRNA(Pro) + L-proline + ATP = L-prolyl-tRNA(Pro) + AMP + diphosphate. Functionally, catalyzes the attachment of proline to tRNA(Pro) in a two-step reaction: proline is first activated by ATP to form Pro-AMP and then transferred to the acceptor end of tRNA(Pro). The chain is Proline--tRNA ligase from Haloarcula marismortui (strain ATCC 43049 / DSM 3752 / JCM 8966 / VKM B-1809) (Halobacterium marismortui).